We begin with the raw amino-acid sequence, 354 residues long: Envelope protein US28 (354 aa).

Residues 1-37 are Extracellular-facing; that stretch reads MTPTTTTAELTTEFDYDEDATPCVFTDVLNQSKPVTL. N-linked (GlcNAc...) asparagine; by host glycosylation is present at asparagine 30. A helical transmembrane segment spans residues 38–58; that stretch reads FLYGVVFLFGSIGNFLVIFTI. Residues 59-69 lie on the Cytoplasmic side of the membrane; sequence TWRRRIQCSGD. Residues 70-90 traverse the membrane as a helical segment; the sequence is VYFINLAAADLLFVCTLPLWM. Topologically, residues 91 to 101 are extracellular; that stretch reads QYLLDHNSLAS. Residues 102–122 traverse the membrane as a helical segment; the sequence is VPCTLLTACFYVAMFASLCFI. Topologically, residues 123-145 are cytoplasmic; the sequence is TEIALDRYYAIVYMRYRPVKQAC. A helical membrane pass occupies residues 146-166; it reads LFSIFWWIFAVIIAIPHFMVV. The Extracellular segment spans residues 167–183; sequence TKKDNQCMTDYDYLEVS. A helical membrane pass occupies residues 184 to 204; it reads YPIILNVELMLGAFVIPLSVI. The Cytoplasmic portion of the chain corresponds to 205-228; sequence SYCYYRISRIVAVSQSRHKGRIVR. A helical transmembrane segment spans residues 229-249; it reads VLIAVVLVFIIFWLPYHLTLF. Residues 250 to 273 are Extracellular-facing; it reads VDTLKLLKWISSSCEFERSLKRAL. Residues 274–294 traverse the membrane as a helical segment; the sequence is ILTESLAFCHCCLNPLLYVFV. Residues 295–354 lie on the Cytoplasmic side of the membrane; it reads GTKFRQELHCLLAEFRQRLFSRDVSWYHSMSFSRRGSPSRRETSSDTLSDEVCRVSQIIP.

Belongs to the G-protein coupled receptor 1 family. As to quaternary structure, interacts with host GPRASP1; this interaction targets US28 to lysosomes for degradation. Interacts with host CX3CL1/Fractalkine (via N-terminus). In terms of processing, phosphorylated. High phosphorylation occurs concomitantly with receptor endocytosis and correlate with low receptor presence at the plasma membrane.

The protein localises to the host cell membrane. Receptor for a C-C type chemokine. Binds to a great number of different CC-chemokines including CCL5/RANTES, CCL2/MCP-1, CCL3/MIP-1-alpha as well as CX3CL1/Fractalkine. Transduces signals resulting in the activation of MAP kinase signaling pathways and augmentation of intracellular calcium ion levels, leading to alterations in chemotactic behavior of vascular smooth muscle cells and macrophages. The US28 receptor also exhibits high levels of agonist-independent signaling activity and agonist-independent endocytosis. Interacts with the host Gi complex without activating it, thereby probably interfering with the chemokine-Gi signaling. May also function as a G protein sink to sequester G protein from the cell surface via internalization. Interacts with endogenous Gaq/11 subunits and thereby constitutively activates phospholipase C. The sequence is that of Envelope protein US28 (US28) from Human cytomegalovirus (strain Merlin) (HHV-5).